Consider the following 76-residue polypeptide: DNA-directed RNA polymerase subunit epsilon (76 aa).

Belongs to the RNA polymerase subunit epsilon family. As to quaternary structure, RNAP is composed of a core of 2 alpha, a beta and a beta' subunit. The core is associated with a delta subunit, and at least one of epsilon or omega. When a sigma factor is associated with the core the holoenzyme is formed, which can initiate transcription.

The catalysed reaction is RNA(n) + a ribonucleoside 5'-triphosphate = RNA(n+1) + diphosphate. A non-essential component of RNA polymerase (RNAP). In Streptococcus gordonii (strain Challis / ATCC 35105 / BCRC 15272 / CH1 / DL1 / V288), this protein is DNA-directed RNA polymerase subunit epsilon.